The primary structure comprises 245 residues: Extracellular protein ARB_04177 (245 aa).

The protein localises to the secreted. This is Extracellular protein ARB_04177 from Arthroderma benhamiae (strain ATCC MYA-4681 / CBS 112371) (Trichophyton mentagrophytes).